Here is a 489-residue protein sequence, read N- to C-terminus: Probable 26S proteasome non-ATPase regulatory subunit 3 (489 aa).

A disordered region spans residues 1–23; that stretch reads MTQDVEMKEVPAPAPSNSVTAAT. The region spanning 241-422 is the PCI domain; that stretch reads CRYLFYLGKI…GWMVSKETGD (182 aa). Residues 454 to 489 form a disordered region; that stretch reads PANSHKDKESAEKRRERQQQEQELAKHIAEEDDDEF. The span at 457–482 shows a compositional bias: basic and acidic residues; the sequence is SHKDKESAEKRRERQQQEQELAKHIA.

It belongs to the proteasome subunit S3 family. The 26S proteasome is composed of a core protease, known as the 20S proteasome, capped at one or both ends by the 19S regulatory complex (RC). The RC is composed of at least 18 different subunits in two subcomplexes, the base and the lid, which form the portions proximal and distal to the 20S proteolytic core, respectively.

The protein resides in the nucleus. Acts as a regulatory subunit of the 26 proteasome which is involved in the ATP-dependent degradation of ubiquitinated proteins. This is Probable 26S proteasome non-ATPase regulatory subunit 3 (21D7) from Daucus carota (Wild carrot).